The primary structure comprises 179 residues: Large ribosomal subunit protein uL6 (179 aa).

The protein belongs to the universal ribosomal protein uL6 family. Part of the 50S ribosomal subunit.

In terms of biological role, this protein binds to the 23S rRNA, and is important in its secondary structure. It is located near the subunit interface in the base of the L7/L12 stalk, and near the tRNA binding site of the peptidyltransferase center. The protein is Large ribosomal subunit protein uL6 of Halothermothrix orenii (strain H 168 / OCM 544 / DSM 9562).